Here is a 680-residue protein sequence, read N- to C-terminus: Methionine--tRNA ligase (680 aa).

The 'HIGH' region signature appears at 15–25 (PYANGPVHIGH). Zn(2+) contacts are provided by C147, C150, C160, and C163. The short motif at 332 to 336 (KISTS) is the 'KMSKS' region element. T335 contacts ATP. The 103-residue stretch at 578-680 (EFEKLDIRVG…REVKPGSEVK (103 aa)) folds into the tRNA-binding domain.

It belongs to the class-I aminoacyl-tRNA synthetase family. MetG type 1 subfamily. In terms of assembly, homodimer. It depends on Zn(2+) as a cofactor.

It is found in the cytoplasm. The enzyme catalyses tRNA(Met) + L-methionine + ATP = L-methionyl-tRNA(Met) + AMP + diphosphate. Functionally, is required not only for elongation of protein synthesis but also for the initiation of all mRNA translation through initiator tRNA(fMet) aminoacylation. The protein is Methionine--tRNA ligase of Phocaeicola vulgatus (strain ATCC 8482 / DSM 1447 / JCM 5826 / CCUG 4940 / NBRC 14291 / NCTC 11154) (Bacteroides vulgatus).